The following is a 431-amino-acid chain: Transposase for insertion sequence element IS232 (431 aa).

An HTH IS21-type domain is found at 20–79; the sequence is PNFKKLMGNLKMKINKSQLARELNVDRRTIDKYLNGFTPKGTKNKTSKIDTYYEVIAALL. A DNA-binding region (H-T-H motif) is located at residues 35 to 54; the sequence is KSQLARELNVDRRTIDKYLN. The Integrase catalytic domain occupies 140 to 315; sequence YETPPGEQAQ…IPVFALKQEK (176 aa).

This sequence belongs to the transposase IS21/IS408/IS1162 family.

In terms of biological role, involved in the transposition of the insertion sequence. The sequence is that of Transposase for insertion sequence element IS232 from Bacillus thuringiensis subsp. berliner.